A 229-amino-acid polypeptide reads, in one-letter code: Urease accessory protein UreF (229 aa).

It belongs to the UreF family. UreD, UreF and UreG form a complex that acts as a GTP-hydrolysis-dependent molecular chaperone, activating the urease apoprotein by helping to assemble the nickel containing metallocenter of UreC. The UreE protein probably delivers the nickel.

It is found in the cytoplasm. Functionally, required for maturation of urease via the functional incorporation of the urease nickel metallocenter. This Nostoc sp. (strain PCC 7120 / SAG 25.82 / UTEX 2576) protein is Urease accessory protein UreF.